We begin with the raw amino-acid sequence, 502 residues long: Probable cobyric acid synthase (502 aa).

One can recognise a GATase cobBQ-type domain in the interval 250 to 448; the sequence is KITIGTLRLP…FHGIFHNFEF (199 aa). The active-site Nucleophile is Cys-330. The active site involves His-440.

Belongs to the CobB/CobQ family. CobQ subfamily.

It participates in cofactor biosynthesis; adenosylcobalamin biosynthesis. Catalyzes amidations at positions B, D, E, and G on adenosylcobyrinic A,C-diamide. NH(2) groups are provided by glutamine, and one molecule of ATP is hydrogenolyzed for each amidation. This Methanosphaera stadtmanae (strain ATCC 43021 / DSM 3091 / JCM 11832 / MCB-3) protein is Probable cobyric acid synthase.